A 752-amino-acid polypeptide reads, in one-letter code: BCLAF1 and THRAP3 family member 3 (752 aa).

Over residues 1 to 13 the composition is skewed to basic residues; that stretch reads MARSRSRSPRWKQ. 3 disordered regions span residues 1–114, 132–177, and 190–252; these read MARS…YMPT, PTVQ…QMSL, and DELR…DPAR. A phosphoserine mark is found at Ser15 and Ser17. Positions 23–57 are enriched in basic and acidic residues; that stretch reads FEYHEERHFHGHYDPEYRHDQQRPFTWRMDDEKHG. A phosphoserine mark is found at Ser78 and Ser80. Residues 85 to 109 show a composition bias toward basic and acidic residues; the sequence is PVEKFDTYKPHQEYFPGRGDDDRRS. Over residues 190–199 the composition is skewed to basic and acidic residues; sequence DELRHQRVQE. Residue Ser205 is modified to Phosphoserine. 2 stretches are compositionally biased toward basic and acidic residues: residues 222-231 and 238-252; these read RYPEDHDFRK and RPTDAARYENRDPAR. Lys416 is covalently cross-linked (Glycyl lysine isopeptide (Lys-Gly) (interchain with G-Cter in SUMO2)). Phosphoserine is present on Ser592.

The protein belongs to the BCLAF1/THRAP3 family.

The protein resides in the mitochondrion. This chain is BCLAF1 and THRAP3 family member 3, found in Mus musculus (Mouse).